Reading from the N-terminus, the 315-residue chain is Ribosomal RNA small subunit methyltransferase H (315 aa).

S-adenosyl-L-methionine is bound by residues 37 to 39, aspartate 57, aspartate 105, and glutamine 112; that span reads GGH.

The protein belongs to the methyltransferase superfamily. RsmH family.

The protein resides in the cytoplasm. It carries out the reaction cytidine(1402) in 16S rRNA + S-adenosyl-L-methionine = N(4)-methylcytidine(1402) in 16S rRNA + S-adenosyl-L-homocysteine + H(+). Its function is as follows. Specifically methylates the N4 position of cytidine in position 1402 (C1402) of 16S rRNA. This Nitrosococcus oceani (strain ATCC 19707 / BCRC 17464 / JCM 30415 / NCIMB 11848 / C-107) protein is Ribosomal RNA small subunit methyltransferase H.